The chain runs to 601 residues: Glutamine--fructose-6-phosphate aminotransferase [isomerizing] (601 aa).

Cys2 acts as the Nucleophile; for GATase activity in catalysis. The region spanning 2–218 (CGIVGYIGYD…DHEIVIVKKD (217 aa)) is the Glutamine amidotransferase type-2 domain. SIS domains follow at residues 284 to 423 (IIND…EHGR) and 453 to 591 (IATD…VDKP). The For Fru-6P isomerization activity role is filled by Lys596.

Homodimer.

It is found in the cytoplasm. It catalyses the reaction D-fructose 6-phosphate + L-glutamine = D-glucosamine 6-phosphate + L-glutamate. Its function is as follows. Catalyzes the first step in hexosamine metabolism, converting fructose-6P into glucosamine-6P using glutamine as a nitrogen source. In Staphylococcus aureus (strain COL), this protein is Glutamine--fructose-6-phosphate aminotransferase [isomerizing].